Here is a 587-residue protein sequence, read N- to C-terminus: Aspartate--tRNA(Asp/Asn) ligase (587 aa).

Residue glutamate 173 coordinates L-aspartate. Residues 197–200 (QLFK) form an aspartate region. Residue arginine 219 participates in L-aspartate binding. Residues 219–221 (RDE) and glutamine 228 each bind ATP. Histidine 448 serves as a coordination point for L-aspartate. Glutamate 481 is a binding site for ATP. Residue arginine 488 coordinates L-aspartate. 533–536 (GLDR) contributes to the ATP binding site.

The protein belongs to the class-II aminoacyl-tRNA synthetase family. Type 1 subfamily. In terms of assembly, homodimer.

It localises to the cytoplasm. The catalysed reaction is tRNA(Asx) + L-aspartate + ATP = L-aspartyl-tRNA(Asx) + AMP + diphosphate. Aspartyl-tRNA synthetase with relaxed tRNA specificity since it is able to aspartylate not only its cognate tRNA(Asp) but also tRNA(Asn). Reaction proceeds in two steps: L-aspartate is first activated by ATP to form Asp-AMP and then transferred to the acceptor end of tRNA(Asp/Asn). In Alcanivorax borkumensis (strain ATCC 700651 / DSM 11573 / NCIMB 13689 / SK2), this protein is Aspartate--tRNA(Asp/Asn) ligase.